The following is a 357-amino-acid chain: MSHNSFGHLFRVTTWGESHGPAIGCVVDGCPPRLPLSEADIQPWLDRRRPGQSKFTTQRQEPDAVEILSGVFEGQTTGTPISLLIRNTDQRSRDYGDIAERYRPGHADVAYDLKYGIRDYRGGGRSSARETAMRVAAGAVARRVLGEGVRIRGALTQIGAHRVDRARWDWDAVDTNPFFCPDPAMVPVWEEYLGAVRKAGSSIGAVIEIVAEGVPAGWGAPVYGKLDSDLAMALMSINAVKGIEIGDGFAAAELTGEENADPMRMVDGRLTFGANHAGGVLGGISTGQPLVARFAVKPTSSILAPVDSVTRGGENVEVSTRGRHDPCVGIRAVPVGEAMMACVLADHFLRHRAQVGP.

Arg48 contributes to the NADP(+) binding site. FMN-binding positions include 125-127 (RSS), 238-239 (NA), Gly282, 297-301 (KPTSS), and Arg323.

This sequence belongs to the chorismate synthase family. As to quaternary structure, homotetramer. The cofactor is FMNH2.

It carries out the reaction 5-O-(1-carboxyvinyl)-3-phosphoshikimate = chorismate + phosphate. It participates in metabolic intermediate biosynthesis; chorismate biosynthesis; chorismate from D-erythrose 4-phosphate and phosphoenolpyruvate: step 7/7. In terms of biological role, catalyzes the anti-1,4-elimination of the C-3 phosphate and the C-6 proR hydrogen from 5-enolpyruvylshikimate-3-phosphate (EPSP) to yield chorismate, which is the branch point compound that serves as the starting substrate for the three terminal pathways of aromatic amino acid biosynthesis. This reaction introduces a second double bond into the aromatic ring system. The polypeptide is Chorismate synthase (Gluconacetobacter diazotrophicus (strain ATCC 49037 / DSM 5601 / CCUG 37298 / CIP 103539 / LMG 7603 / PAl5)).